Reading from the N-terminus, the 483-residue chain is Endoplasmic reticulum lectin 1 (483 aa).

Positions 1-33 (MEEGDGGLRSLVPGGPLLLVLYGLLEASGGGRA) are cleaved as a signal peptide. 2 consecutive MRH domains span residues 111–246 (SSCS…LCSH) and 342–469 (SYCF…ICKI). Residues C113 and C126 are joined by a disulfide bond. A glycan (N-linked (GlcNAc...) asparagine) is linked at N195. 5 disulfide bridges follow: C199-C232, C215-C244, C344-C357, C421-C455, and C436-C467.

May form a complex with OS9, HSPA5, SYVN1, and SEL1L with which it interacts directly. Interacts (via PRKCSH 2 domain) with KREMEN2 (when glycosylated). Interacts with HSPA5. N-glycosylated.

It localises to the endoplasmic reticulum lumen. Functionally, probable lectin that binds selectively to improperly folded lumenal proteins. May function in endoplasmic reticulum quality control and endoplasmic reticulum-associated degradation (ERAD) of both non-glycosylated proteins and glycoproteins. The protein is Endoplasmic reticulum lectin 1 (Erlec1) of Mus musculus (Mouse).